Here is a 392-residue protein sequence, read N- to C-terminus: 23S rRNA (uracil(747)-C(5))-methyltransferase RlmC (392 aa).

Positions 4, 12, 15, and 93 each coordinate [4Fe-4S] cluster. 4 residues coordinate S-adenosyl-L-methionine: glutamine 218, phenylalanine 247, glutamate 275, and asparagine 321. The Nucleophile role is filled by cysteine 348.

This sequence belongs to the class I-like SAM-binding methyltransferase superfamily. RNA M5U methyltransferase family. RlmC subfamily.

It carries out the reaction uridine(747) in 23S rRNA + S-adenosyl-L-methionine = 5-methyluridine(747) in 23S rRNA + S-adenosyl-L-homocysteine + H(+). In terms of biological role, catalyzes the formation of 5-methyl-uridine at position 747 (m5U747) in 23S rRNA. The chain is 23S rRNA (uracil(747)-C(5))-methyltransferase RlmC from Haemophilus influenzae (strain ATCC 51907 / DSM 11121 / KW20 / Rd).